Consider the following 272-residue polypeptide: Phytolongin Phyl2.2 (272 aa).

One can recognise a Longin domain in the interval 12–116 (CIAKGTVVLA…LINPVSHCLQ (105 aa)). A helical; Anchor for type IV membrane protein membrane pass occupies residues 243 to 263 (WVVLMFDFCICAVLFGIWLWI).

This sequence belongs to the synaptobrevin family.

It localises to the membrane. Non-SNARE longin protein involved in membrane-trafficking machinery. The polypeptide is Phytolongin Phyl2.2 (Arabidopsis thaliana (Mouse-ear cress)).